The following is an 880-amino-acid chain: Translation initiation factor IF-2 (880 aa).

The segment covering 143–228 (EAEAKAKAKA…EAERNGDHHI (86 aa)) has biased composition (basic and acidic residues). Residues 143–289 (EAEAKAKAKA…APESMAHGFN (147 aa)) are disordered. The span at 249-262 (GRRARNKSNAKKRG) shows a compositional bias: basic residues. The 170-residue stretch at 380–549 (SRAPVVTIMG…LLQAEVLELK (170 aa)) folds into the tr-type G domain. The G1 stretch occupies residues 389–396 (GHVDHGKT). 389–396 (GHVDHGKT) lines the GTP pocket. The interval 414–418 (GITQH) is G2. The tract at residues 435–438 (DTPG) is G3. Residues 435 to 439 (DTPGH) and 489 to 492 (NKMD) contribute to the GTP site. The interval 489-492 (NKMD) is G4. The interval 525–527 (SAK) is G5.

The protein belongs to the TRAFAC class translation factor GTPase superfamily. Classic translation factor GTPase family. IF-2 subfamily.

It localises to the cytoplasm. One of the essential components for the initiation of protein synthesis. Protects formylmethionyl-tRNA from spontaneous hydrolysis and promotes its binding to the 30S ribosomal subunits. Also involved in the hydrolysis of GTP during the formation of the 70S ribosomal complex. The sequence is that of Translation initiation factor IF-2 from Shewanella putrefaciens (strain CN-32 / ATCC BAA-453).